Here is a 520-residue protein sequence, read N- to C-terminus: Ribonuclease Y (520 aa).

Residues 3-23 (FILVLCTVSSLFVGGGTGIFL) form a helical membrane-spanning segment. One can recognise a KH domain in the interval 209-272 (TVTAVTLPSE…QVAKMALERL (64 aa)). Positions 335 to 429 (VLRHSIEVAS…VQASDCLSGA (95 aa)) constitute an HD domain.

Belongs to the RNase Y family.

Its subcellular location is the cell membrane. Its function is as follows. Endoribonuclease that initiates mRNA decay. The protein is Ribonuclease Y of Lawsonia intracellularis (strain PHE/MN1-00).